Reading from the N-terminus, the 426-residue chain is Gamma-glutamyl phosphate reductase (426 aa).

This sequence belongs to the gamma-glutamyl phosphate reductase family.

It is found in the cytoplasm. It carries out the reaction L-glutamate 5-semialdehyde + phosphate + NADP(+) = L-glutamyl 5-phosphate + NADPH + H(+). Its pathway is amino-acid biosynthesis; L-proline biosynthesis; L-glutamate 5-semialdehyde from L-glutamate: step 2/2. Its function is as follows. Catalyzes the NADPH-dependent reduction of L-glutamate 5-phosphate into L-glutamate 5-semialdehyde and phosphate. The product spontaneously undergoes cyclization to form 1-pyrroline-5-carboxylate. This Cupriavidus taiwanensis (strain DSM 17343 / BCRC 17206 / CCUG 44338 / CIP 107171 / LMG 19424 / R1) (Ralstonia taiwanensis (strain LMG 19424)) protein is Gamma-glutamyl phosphate reductase.